Reading from the N-terminus, the 78-residue chain is Acyl carrier protein (78 aa).

The region spanning 2-77 (SNFEERVKKI…AAIDYVVSSA (76 aa)) is the Carrier domain. O-(pantetheine 4'-phosphoryl)serine is present on S37.

It belongs to the acyl carrier protein (ACP) family. In terms of processing, 4'-phosphopantetheine is transferred from CoA to a specific serine of apo-ACP by AcpS. This modification is essential for activity because fatty acids are bound in thioester linkage to the sulfhydryl of the prosthetic group.

The protein localises to the cytoplasm. It functions in the pathway lipid metabolism; fatty acid biosynthesis. Functionally, carrier of the growing fatty acid chain in fatty acid biosynthesis. Is probably involved in the biosynthesis of docosahexaenoic acid (DHA) which is produced by this bacterium as a fatty acyl component in its membrane lipid. The protein is Acyl carrier protein of Moritella marina (Vibrio marinus).